Here is a 328-residue protein sequence, read N- to C-terminus: Probable GDP-L-fucose synthase 1 (328 aa).

25–31 (GHRGLVG) contributes to the NADP(+) binding site. The Proton donor/acceptor role is filled by Tyr-152. Residues Lys-156, 179–182 (PTNL), and His-195 each bind NADP(+). Substrate contacts are provided by Arg-203, Trp-218, Arg-225, and Asp-285.

This sequence belongs to the NAD(P)-dependent epimerase/dehydratase family. Fucose synthase subfamily. Homodimer.

The enzyme catalyses GDP-beta-L-fucose + NADP(+) = GDP-4-dehydro-alpha-D-rhamnose + NADPH + H(+). It functions in the pathway nucleotide-sugar biosynthesis; GDP-L-fucose biosynthesis via de novo pathway; GDP-L-fucose from GDP-alpha-D-mannose: step 2/2. Its function is as follows. Catalyzes the two-step NADP-dependent conversion of GDP-4-dehydro-6-deoxy-D-mannose to GDP-fucose, involving an epimerase and a reductase reaction. This is Probable GDP-L-fucose synthase 1 from Oryza sativa subsp. japonica (Rice).